Consider the following 385-residue polypeptide: Basigin (385 aa).

The signal sequence occupies residues 1–21 (MAAALFVLLGFALLGTHGASG). In terms of domain architecture, Ig-like spans 37 to 120 (GGSVELHCEA…SNDPDRNHLT (84 aa)). 3 disulfides stabilise this stretch: Cys-44/Cys-108, Cys-157/Cys-203, and Cys-242/Cys-301. An Ig-like C2-type domain is found at 138–219 (EPGTVFTTVE…MGTANIQLHG (82 aa)). Over 138-323 (EPGTVFTTVE…ITLRVRSHLA (186 aa)) the chain is Extracellular. N-linked (GlcNAc...) asparagine glycosylation occurs at Asn-160. Residues 195-199 (DDQWG) form an essential for interaction with KDR/VEGFR2 region. The region spanning 221-315 (PRVKAVKSSE…SKGSDQAIIT (95 aa)) is the Ig-like V-type domain. Residues Asn-268 and Asn-302 are each glycosylated (N-linked (GlcNAc...) asparagine). A helical membrane pass occupies residues 324-344 (ALWPFLGIVAEVLVLVTIIFI). The Cytoplasmic portion of the chain corresponds to 345–385 (YEKRRKPEDVLDDDDAGSAPLKSSGQHQNDKGKNVRQRNSS). The interval 353 to 385 (DVLDDDDAGSAPLKSSGQHQNDKGKNVRQRNSS) is disordered. Residues Ser-362 and Ser-368 each carry the phosphoserine modification.

As to quaternary structure, homooligomer. Interacts with NXNL1. Interacts with SLC2A1 and SLC16A1/GLUT1. Interacts with XKR8; promoting its localization at the cell membrane. (Microbial infection) Interacts with P.falciparum (isolate 3D7) RH5/PfRH5; the interaction is required for the invasion of the host erythrocytes by the parasite at the merozoite stage. In terms of assembly, homooligomer. Forms heterooligomers with isoform 3. Interacts with VEGFA and KDR/VEGFR2. Interacts with PPIA/CYPA. Interacts with PPIL2; regulates BSG transport to the cell membrane. Interacts with SLC16A1; interaction mediates SLC16A3 targeting to the plasma membrane. Interacts with SLC16A12. Interacts with SLC16A11. Interacts with AJAP1. Interacts with SLC1A3, ATP1B2, MAG and L1CAM. Interacts with SLC16A3; interaction mediates SLC16A3 targeting to the plasma membrane. As to quaternary structure, (Microbial infection) Interacts with P.falciparum (isolates 3D7 or 7G8) RH5/PfRH5; the interaction is required for the invasion of the host erythrocytes by the parasite at the merozoite stage. (Microbial infection) Does not interact with severe acute respiratory syndrome coronavirus 2 (SARS-CoV-2) spike glycoprotein, even if previous works were based on a putative interaction. In terms of assembly, forms heterooligomers with isoform 2. As to quaternary structure, interacts with SLC16A6; this interaction mediates targeting to the plasma membrane. Post-translationally, N-glycosylated. As to expression, retina-specific. Expressed in retinal cone photoreceptors (at protein level). Expressed in erythrocytes (at protein level). Highly expressed in melanoma cell lines (at protein level). Highly expressed in the heart, kidney, skeletal muscle and testis. In terms of tissue distribution, highly expressed in the bone marrow, fetal liver, lung, testis and thymus.

It localises to the melanosome. The protein resides in the cell membrane. It is found in the photoreceptor inner segment. The protein localises to the cell projection. Its subcellular location is the cilium. It localises to the photoreceptor outer segment. The protein resides in the endosome. It is found in the endoplasmic reticulum membrane. The protein localises to the basolateral cell membrane. In terms of biological role, essential for normal retinal maturation and development. Acts as a retinal cell surface receptor for NXNL1 and plays an important role in NXNL1-mediated survival of retinal cone photoreceptors. In association with glucose transporter SLC16A1/GLUT1 and NXNL1, promotes retinal cone survival by enhancing aerobic glycolysis and accelerating the entry of glucose into photoreceptors. May act as a potent stimulator of IL6 secretion in multiple cell lines that include monocytes. (Microbial infection) Erythrocyte receptor for P.falciparum RH5 which is essential for erythrocyte invasion by the merozoite stage of P.falciparum isolates 3D7 and Dd2. Its function is as follows. Signaling receptor for cyclophilins, essential for PPIA/CYPA and PPIB/CYPB-dependent signaling related to chemotaxis and adhesion of immune cells. Plays an important role in targeting monocarboxylate transporters SLC16A1/GLUT1, SLC16A11 and SLC16A12 to the plasma membrane. Acts as a coreceptor for vascular endothelial growth factor receptor 2 (KDR/VEGFR2) in endothelial cells enhancing its VEGFA-mediated activation and downstream signaling. Promotes angiogenesis through EPAS1/HIF2A-mediated up-regulation of VEGFA (isoform VEGF-165 and VEGF-121) and KDR/VEGFR2 in endothelial cells. Plays a key role in regulating tumor growth, invasion, metastasis and neoangiogenesis by stimulating the production and release of extracellular matrix metalloproteinases and KDR/VEGFR2 by both tumor cells and stromal cells (fibroblasts and endothelial cells). Functionally, (Microbial infection) Erythrocyte receptor for P.falciparum RH5 which is essential for erythrocyte invasion by the merozoite stage of P.falciparum isolates 3D7, Dd2, 7G8 and HB3. Binding of P.falciparum RH5 results in BSG dimerization which triggers an increase in intracellular Ca(2+) in the erythrocyte. This essential step leads to a rearrangement of the erythrocyte cytoskeleton required for the merozoite invasion. In terms of biological role, (Microbial infection) Can facilitate human SARS coronavirus (SARS-CoV-1) infection via its interaction with virus-associated PPIA/CYPA. (Microbial infection) Can facilitate HIV-1 infection via its interaction with virus-associated PPIA/CYPA. Its function is as follows. (Microbial infection) First described as a receptor for severe acute respiratory syndrome coronavirus 2 (SARS-CoV-2), it is not required for SARS-CoV-2 infection. Functionally, (Microbial infection) Acts as a receptor for measles virus. In terms of biological role, (Microbial infection) Promotes entry of pentamer-expressing human cytomegalovirus (HCMV) into epithelial and endothelial cells. In Homo sapiens (Human), this protein is Basigin.